A 382-amino-acid polypeptide reads, in one-letter code: Galactokinase (382 aa).

34–37 (EHTD) contributes to the substrate binding site. An ATP-binding site is contributed by 124–130 (GAGLSSS). Ser-130 and Glu-162 together coordinate Mg(2+). Asp-174 (proton acceptor) is an active-site residue. Residue Tyr-223 participates in substrate binding.

The protein belongs to the GHMP kinase family. GalK subfamily.

The protein localises to the cytoplasm. The enzyme catalyses alpha-D-galactose + ATP = alpha-D-galactose 1-phosphate + ADP + H(+). It participates in carbohydrate metabolism; galactose metabolism. In terms of biological role, catalyzes the transfer of the gamma-phosphate of ATP to D-galactose to form alpha-D-galactose-1-phosphate (Gal-1-P). In Salmonella newport (strain SL254), this protein is Galactokinase.